The chain runs to 85 residues: uncharacterized protein (85 aa).

The protein belongs to the YciI family.

This is an uncharacterized protein from Bacillus subtilis (strain 168).